Consider the following 88-residue polypeptide: MEEITCAFLLLLAGLPALEASDPVDKDSPFYYDWESLQLGGLIFGGLLCIAGIAMALSGKCKCRRTHKPSSLPGKATPLIIPGSANTC.

A signal peptide spans 1 to 20 (MEEITCAFLLLLAGLPALEA). Residues 21-38 (SDPVDKDSPFYYDWESLQ) lie on the Extracellular side of the membrane. A helical membrane pass occupies residues 39-59 (LGGLIFGGLLCIAGIAMALSG). At 60–88 (KCKCRRTHKPSSLPGKATPLIIPGSANTC) the chain is on the cytoplasmic side.

Belongs to the FXYD family. As to quaternary structure, regulatory subunit of the sodium/potassium-transporting ATPase which is composed of a catalytic alpha subunit, a non-catalytic beta subunit and a regulatory subunit. The regulatory subunit, a member of the FXYD protein family, modulates the enzymatic activity in a tissue- and isoform-specific way by changing affinities of the Na+/K+-ATPase toward Na(+), K(+) or ATP.

The protein localises to the cell membrane. The protein resides in the basolateral cell membrane. Associates with and regulates the activity of the sodium/potassium-transporting ATPase (NKA) which catalyzes the hydrolysis of ATP coupled with the exchange of Na(+) and K(+) ions across the plasma membrane. Increases the apparent affinity of the transporter for Na(+) and increases NKA activity. This is FXYD domain-containing ion transport regulator 4 (Fxyd4) from Mus musculus (Mouse).